The primary structure comprises 276 residues: Light-independent protochlorophyllide reductase iron-sulfur ATP-binding protein (276 aa).

Residues 12 to 17 (GIGKST) and Lys-41 contribute to the ATP site. A Mg(2+)-binding site is contributed by Ser-16. [4Fe-4S] cluster contacts are provided by Cys-97 and Cys-131. Residue 182–183 (NR) coordinates ATP.

The protein belongs to the NifH/BchL/ChlL family. As to quaternary structure, homodimer. Protochlorophyllide reductase is composed of three subunits; BchL, BchN and BchB. [4Fe-4S] cluster is required as a cofactor.

It carries out the reaction chlorophyllide a + oxidized 2[4Fe-4S]-[ferredoxin] + 2 ADP + 2 phosphate = protochlorophyllide a + reduced 2[4Fe-4S]-[ferredoxin] + 2 ATP + 2 H2O. It participates in porphyrin-containing compound metabolism; bacteriochlorophyll biosynthesis (light-independent). Component of the dark-operative protochlorophyllide reductase (DPOR) that uses Mg-ATP and reduced ferredoxin to reduce ring D of protochlorophyllide (Pchlide) to form chlorophyllide a (Chlide). This reaction is light-independent. The L component serves as a unique electron donor to the NB-component of the complex, and binds Mg-ATP. This is Light-independent protochlorophyllide reductase iron-sulfur ATP-binding protein from Chlorobaculum tepidum (strain ATCC 49652 / DSM 12025 / NBRC 103806 / TLS) (Chlorobium tepidum).